A 386-amino-acid chain; its full sequence is Succinate--CoA ligase [ADP-forming] subunit beta (386 aa).

An ATP-grasp domain is found at 9–244 (KEILRKYGVP…HDEEDPLETR (236 aa)). ATP-binding positions include lysine 46, 53 to 55 (GRG), glutamate 99, cysteine 102, and glutamate 107. Mg(2+) is bound by residues asparagine 199 and aspartate 213. Substrate is bound by residues asparagine 264 and 321-323 (GIM).

It belongs to the succinate/malate CoA ligase beta subunit family. In terms of assembly, heterotetramer of two alpha and two beta subunits. It depends on Mg(2+) as a cofactor.

The catalysed reaction is succinate + ATP + CoA = succinyl-CoA + ADP + phosphate. The enzyme catalyses GTP + succinate + CoA = succinyl-CoA + GDP + phosphate. It functions in the pathway carbohydrate metabolism; tricarboxylic acid cycle; succinate from succinyl-CoA (ligase route): step 1/1. Its function is as follows. Succinyl-CoA synthetase functions in the citric acid cycle (TCA), coupling the hydrolysis of succinyl-CoA to the synthesis of either ATP or GTP and thus represents the only step of substrate-level phosphorylation in the TCA. The beta subunit provides nucleotide specificity of the enzyme and binds the substrate succinate, while the binding sites for coenzyme A and phosphate are found in the alpha subunit. This chain is Succinate--CoA ligase [ADP-forming] subunit beta, found in Rickettsia conorii (strain ATCC VR-613 / Malish 7).